The following is a 239-amino-acid chain: LRRN4 C-terminal-like protein (239 aa).

An N-terminal signal peptide occupies residues Met-1–Ser-19. Topologically, residues Gln-20–Thr-194 are extracellular. The Fibronectin type-III domain occupies Gln-82–Ser-179. N-linked (GlcNAc...) asparagine glycosylation is found at Asn-132 and Asn-174. Residues Leu-195–Val-215 traverse the membrane as a helical segment. Residues Trp-216 to Leu-239 are Cytoplasmic-facing.

The protein localises to the membrane. The sequence is that of LRRN4 C-terminal-like protein (Lrrn4cl) from Mus musculus (Mouse).